Reading from the N-terminus, the 130-residue chain is Small ribosomal subunit protein uS8 (130 aa).

It belongs to the universal ribosomal protein uS8 family. Part of the 30S ribosomal subunit. Contacts proteins S5 and S12.

In terms of biological role, one of the primary rRNA binding proteins, it binds directly to 16S rRNA central domain where it helps coordinate assembly of the platform of the 30S subunit. In Alcanivorax borkumensis (strain ATCC 700651 / DSM 11573 / NCIMB 13689 / SK2), this protein is Small ribosomal subunit protein uS8.